Reading from the N-terminus, the 96-residue chain is Putative pterin-4-alpha-carbinolamine dehydratase (96 aa).

It belongs to the pterin-4-alpha-carbinolamine dehydratase family.

It catalyses the reaction (4aS,6R)-4a-hydroxy-L-erythro-5,6,7,8-tetrahydrobiopterin = (6R)-L-erythro-6,7-dihydrobiopterin + H2O. This chain is Putative pterin-4-alpha-carbinolamine dehydratase, found in Novosphingobium aromaticivorans (strain ATCC 700278 / DSM 12444 / CCUG 56034 / CIP 105152 / NBRC 16084 / F199).